Reading from the N-terminus, the 325-residue chain is Elongation factor P--(R)-beta-lysine ligase (325 aa).

Ser76–Glu78 provides a ligand contact to substrate. ATP is bound by residues Arg100 to Glu102 and Asn109. Tyr118 contributes to the substrate binding site. Glu244–Leu245 serves as a coordination point for ATP. Position 251 (Glu251) interacts with substrate. Gly300 is a binding site for ATP.

This sequence belongs to the class-II aminoacyl-tRNA synthetase family. EpmA subfamily. In terms of assembly, homodimer.

The catalysed reaction is D-beta-lysine + L-lysyl-[protein] + ATP = N(6)-((3R)-3,6-diaminohexanoyl)-L-lysyl-[protein] + AMP + diphosphate + H(+). With EpmB is involved in the beta-lysylation step of the post-translational modification of translation elongation factor P (EF-P) on 'Lys-34'. Catalyzes the ATP-dependent activation of (R)-beta-lysine produced by EpmB, forming a lysyl-adenylate, from which the beta-lysyl moiety is then transferred to the epsilon-amino group of EF-P 'Lys-34'. This is Elongation factor P--(R)-beta-lysine ligase from Salmonella typhi.